A 136-amino-acid chain; its full sequence is Small ribosomal subunit protein uS19 (136 aa).

The protein belongs to the universal ribosomal protein uS19 family.

Protein S19 forms a complex with S13 that binds strongly to the 16S ribosomal RNA. This chain is Small ribosomal subunit protein uS19, found in Methanocorpusculum labreanum (strain ATCC 43576 / DSM 4855 / Z).